Consider the following 522-residue polypeptide: Chromosomal replication initiator protein DnaA (522 aa).

A domain I, interacts with DnaA modulators region spans residues 1 to 71 (MQDFWHAASA…QSLACDYWEM (71 aa)). A domain II region spans residues 71–185 (MQVDVQFVLD…PVDDTVHERS (115 aa)). The tract at residues 186–402 (RLNPILTFDN…GALRKILAYS (217 aa)) is domain III, AAA+ region. Positions 230, 232, 233, and 234 each coordinate ATP. The domain IV, binds dsDNA stretch occupies residues 403 to 522 (NFHGKEITIE…LHVLEQTLKG (120 aa)).

The protein belongs to the DnaA family. In terms of assembly, oligomerizes as a right-handed, spiral filament on DNA at oriC.

The protein resides in the cytoplasm. In terms of biological role, plays an essential role in the initiation and regulation of chromosomal replication. ATP-DnaA binds to the origin of replication (oriC) to initiate formation of the DNA replication initiation complex once per cell cycle. Binds the DnaA box (a 9 base pair repeat at the origin) and separates the double-stranded (ds)DNA. Forms a right-handed helical filament on oriC DNA; dsDNA binds to the exterior of the filament while single-stranded (ss)DNA is stabiized in the filament's interior. The ATP-DnaA-oriC complex binds and stabilizes one strand of the AT-rich DNA unwinding element (DUE), permitting loading of DNA polymerase. After initiation quickly degrades to an ADP-DnaA complex that is not apt for DNA replication. Binds acidic phospholipids. The protein is Chromosomal replication initiator protein DnaA of Ralstonia nicotianae (strain ATCC BAA-1114 / GMI1000) (Ralstonia solanacearum).